Consider the following 268-residue polypeptide: Glutamate racemase (268 aa).

Residues 10 to 11 (DS) and 42 to 43 (YG) contribute to the substrate site. Cys73 serves as the catalytic Proton donor/acceptor. 74–75 (NT) provides a ligand contact to substrate. Cys184 acts as the Proton donor/acceptor in catalysis. Position 185–186 (185–186 (TH)) interacts with substrate.

It belongs to the aspartate/glutamate racemases family.

The enzyme catalyses L-glutamate = D-glutamate. The protein operates within cell wall biogenesis; peptidoglycan biosynthesis. Functionally, provides the (R)-glutamate required for cell wall biosynthesis. The protein is Glutamate racemase of Carnobacterium sp. (strain St2).